The primary structure comprises 291 residues: 4-diphosphocytidyl-2-C-methyl-D-erythritol kinase (291 aa).

K10 is a catalytic residue. Residue 99–109 participates in ATP binding; that stretch reads PMGGGLGGGSS. D141 is a catalytic residue.

It belongs to the GHMP kinase family. IspE subfamily. In terms of assembly, homodimer.

It carries out the reaction 4-CDP-2-C-methyl-D-erythritol + ATP = 4-CDP-2-C-methyl-D-erythritol 2-phosphate + ADP + H(+). Its pathway is isoprenoid biosynthesis; isopentenyl diphosphate biosynthesis via DXP pathway; isopentenyl diphosphate from 1-deoxy-D-xylulose 5-phosphate: step 3/6. Its function is as follows. Catalyzes the phosphorylation of the position 2 hydroxy group of 4-diphosphocytidyl-2C-methyl-D-erythritol. The protein is 4-diphosphocytidyl-2-C-methyl-D-erythritol kinase of Proteus mirabilis (strain HI4320).